Consider the following 139-residue polypeptide: Heat shock protein homolog C338.06c (139 aa).

The sHSP domain maps to 27–139 (AWLSCWGPAL…EFTTRIVEIQ (113 aa)).

The protein belongs to the small heat shock protein (HSP20) family.

It localises to the mitochondrion. This Schizosaccharomyces pombe (strain 972 / ATCC 24843) (Fission yeast) protein is Heat shock protein homolog C338.06c.